The primary structure comprises 139 residues: Putative pre-16S rRNA nuclease (139 aa).

The protein belongs to the YqgF nuclease family.

Its subcellular location is the cytoplasm. Its function is as follows. Could be a nuclease involved in processing of the 5'-end of pre-16S rRNA. The chain is Putative pre-16S rRNA nuclease from Streptococcus sanguinis (strain SK36).